Consider the following 155-residue polypeptide: Ribosomal RNA large subunit methyltransferase H (155 aa).

S-adenosyl-L-methionine is bound by residues Leu72, Gly103, and 122-127 (LSALTL).

This sequence belongs to the RNA methyltransferase RlmH family. Homodimer.

It is found in the cytoplasm. The enzyme catalyses pseudouridine(1915) in 23S rRNA + S-adenosyl-L-methionine = N(3)-methylpseudouridine(1915) in 23S rRNA + S-adenosyl-L-homocysteine + H(+). In terms of biological role, specifically methylates the pseudouridine at position 1915 (m3Psi1915) in 23S rRNA. This Enterobacter sp. (strain 638) protein is Ribosomal RNA large subunit methyltransferase H.